The sequence spans 518 residues: MQKLPKWKIFLSIICTVFAVICALPNFMQVNSKFLPHDSVNLGLDLRGGAHLLLDVDFDTYLNDSMENLADTLRKNFREDKIGYKNLLVRQNSIQLEVRSPEKLKPLKKIINKIDPEIIAEVNENKIKLSYSESRLNDLLNKVVDQSIEIVRMRVDSTGTKEPTLQKQGDKHILLQVPGEENPSYLKNILGKTAKLTFHLVDENANIEEAVKGHVPVGSMLVKGDNASHGEYYVVIKKKVVLGGDQLTTASASFDQNSQAVVAFSFNNLGSKIFGEITKNNIGKRLAIVLDNKLLSAPTINGAIMGGSGIITGNFTVESANELALLLRAGSLPAPLKIIEERSIGPNLGADSIESGKKAGLIGFIAVCIFMVWSYGVLGLFANIALSLALLYILALLSLFQATLTLPGIAGIILTMGMAVDANVLIYERIKEELHKGVSTLYAIRTGFESAFATILDANLTTLIVAFLLYIFGVGAIKGFAVALTIGIISSMFSAIIITKLLIDIWVQYFKPKKLGLV.

The next 6 helical transmembrane spans lie at 9 to 29, 361 to 381, 384 to 404, 406 to 426, 452 to 474, and 486 to 506; these read IFLS…NFMQ, LIGF…LGLF, IALS…QATL, LPGI…NVLI, FATI…IFGV, and IGII…IDIW.

Belongs to the SecD/SecF family. SecD subfamily. As to quaternary structure, forms a complex with SecF. Part of the essential Sec protein translocation apparatus which comprises SecA, SecYEG and auxiliary proteins SecDF-YajC and YidC.

The protein resides in the cell inner membrane. Its function is as follows. Part of the Sec protein translocase complex. Interacts with the SecYEG preprotein conducting channel. SecDF uses the proton motive force (PMF) to complete protein translocation after the ATP-dependent function of SecA. In Rickettsia conorii (strain ATCC VR-613 / Malish 7), this protein is Protein translocase subunit SecD.